Here is a 601-residue protein sequence, read N- to C-terminus: Glutathione-regulated potassium-efflux system protein KefB (601 aa).

13 consecutive transmembrane segments (helical) span residues 4–24 (ADLLTAGVLFLFAAVAAVPLA), 29–49 (IGAVLGYLLAGIAIGPWGLGF), 55–75 (EILHFSELGVVFLMFIIGLEL), 87–107 (IFGVGAAQVLLSAAVLAGLLM), 111–131 (FLWQAAVVGGIGLAMSSTAMA), 152–172 (VLLFQDLAVIPALALVPLLAG), 177–197 (HFDWFKVAMKVLAFAVMLIGG), 207–227 (FIAASGVREVFTAATLLLVLS), 230–250 (LFMDALGLSMALGTFIAGVLL), 262–282 (AIDPFKGLLLGLFFISVGMSL), 284–304 (LGVLYTHLLWVAASVVILVVI), 324–344 (MQFASVLSQGGEFAFVLFSTA), and 356–376 (ALLLVTVTLSMMTTPLLMKGI). Residues 400–519 (KPQVIVVGFG…AGVTQFSRET (120 aa)) enclose the RCK N-terminal domain.

Belongs to the monovalent cation:proton antiporter 2 (CPA2) transporter (TC 2.A.37) family. KefB subfamily. As to quaternary structure, interacts with the regulatory subunit KefG.

The protein resides in the cell inner membrane. Pore-forming subunit of a potassium efflux system that confers protection against electrophiles. Catalyzes K(+)/H(+) antiport. The polypeptide is Glutathione-regulated potassium-efflux system protein KefB (Salmonella enteritidis PT4 (strain P125109)).